Here is a 571-residue protein sequence, read N- to C-terminus: Urease subunit alpha (571 aa).

Residues 133–571 form the Urease domain; it reads GGIDTHVHFI…LPLTQRYFLF (439 aa). H138, H140, and K221 together coordinate Ni(2+). An N6-carboxylysine modification is found at K221. H223 is a substrate binding site. Ni(2+) is bound by residues H250 and H276. Catalysis depends on H324, which acts as the Proton donor. D364 contributes to the Ni(2+) binding site.

Belongs to the metallo-dependent hydrolases superfamily. Urease alpha subunit family. As to quaternary structure, heterotrimer of UreA (gamma), UreB (beta) and UreC (alpha) subunits. Three heterotrimers associate to form the active enzyme. Ni cation serves as cofactor. Carboxylation allows a single lysine to coordinate two nickel ions.

The protein localises to the cytoplasm. It carries out the reaction urea + 2 H2O + H(+) = hydrogencarbonate + 2 NH4(+). It participates in nitrogen metabolism; urea degradation; CO(2) and NH(3) from urea (urease route): step 1/1. The polypeptide is Urease subunit alpha (Staphylococcus aureus (strain bovine RF122 / ET3-1)).